The chain runs to 262 residues: Putative phosphatase HI_0003 (262 aa).

Aspartate 9 functions as the Nucleophile in the catalytic mechanism. The Mg(2+) site is built by aspartate 9 and asparagine 11. Residues 43-44 (SA) and lysine 189 contribute to the phosphate site. Aspartate 212 serves as a coordination point for Mg(2+). Asparagine 215 serves as a coordination point for phosphate.

The protein belongs to the HAD-like hydrolase superfamily. Cof family. Mg(2+) is required as a cofactor.

This Haemophilus influenzae (strain ATCC 51907 / DSM 11121 / KW20 / Rd) protein is Putative phosphatase HI_0003.